A 450-amino-acid polypeptide reads, in one-letter code: Probable ECA polymerase (450 aa).

11 helical membrane-spanning segments follow: residues 6–26 (FSGL…LTWF), 37–57 (VFFS…TSVL), 63–83 (VGVA…CFYA), 118–138 (VILM…NGFL), 155–175 (GVAL…VYFL), 181–201 (AWLF…MIVG), 207–227 (IIIA…ISLW), 228–248 (MLAA…LKRY), 341–361 (LVVM…GLII), 378–398 (YKAA…IVLA), and 410–430 (VFFI…YWLF).

Belongs to the WzyE family. In terms of assembly, probably part of a complex composed of WzxE, WzyE and WzzE.

It is found in the cell inner membrane. The protein operates within bacterial outer membrane biogenesis; enterobacterial common antigen biosynthesis. Probably involved in the polymerization of enterobacterial common antigen (ECA) trisaccharide repeat units. The polypeptide is Probable ECA polymerase (Escherichia coli O139:H28 (strain E24377A / ETEC)).